The following is a 503-amino-acid chain: Probable apyrase 4 (503 aa).

The segment covering 1–14 (MQRSNARSRSNINS) has biased composition (low complexity). The disordered stretch occupies residues 1–39 (MQRSNARSRSNINSDMVDPPEVQTSPGNHRSSPSTAAKP). Residues 1-45 (MQRSNARSRSNINSDMVDPPEVQTSPGNHRSSPSTAAKPKSKRTK) lie on the Cytoplasmic side of the membrane. A helical; Signal-anchor for type II membrane protein transmembrane segment spans residues 46–66 (SIIFVIVACVTIALGLLFIGY). Residues 67 to 503 (SILRSGRNRR…DLSNVAKYKI (437 aa)) are Extracellular-facing. Residue 83 to 93 (VIIDGGSSGTR) coordinates ATP. E206 serves as the catalytic Proton acceptor. Residue 230–240 (GIVELGGASAQ) coordinates ATP. 3 N-linked (GlcNAc...) asparagine glycosylation sites follow: N261, N293, and N338.

This sequence belongs to the GDA1/CD39 NTPase family. It depends on Ca(2+) as a cofactor. In terms of tissue distribution, expressed both in the primary root and lateral root but not in the rosette leaves.

It localises to the membrane. It catalyses the reaction a ribonucleoside 5'-triphosphate + 2 H2O = a ribonucleoside 5'-phosphate + 2 phosphate + 2 H(+). Functionally, catalyzes the hydrolysis of phosphoanhydride bonds of nucleoside tri- and di-phosphates. In Arabidopsis thaliana (Mouse-ear cress), this protein is Probable apyrase 4 (APY4).